Reading from the N-terminus, the 326-residue chain is Probable cell division protein WhiA (326 aa).

The H-T-H motif DNA-binding region spans 275–308 (SLEELGALADPPLTKDAIAGRIRRLLALADKRAR).

This sequence belongs to the WhiA family.

Functionally, involved in cell division and chromosome segregation. This chain is Probable cell division protein WhiA, found in Salinispora tropica (strain ATCC BAA-916 / DSM 44818 / JCM 13857 / NBRC 105044 / CNB-440).